A 370-amino-acid polypeptide reads, in one-letter code: Probable G-protein coupled receptor 85 (370 aa).

At 1 to 25 (MANYSHAADNILQNLSPLTAFLKLT) the chain is on the extracellular side. N-linked (GlcNAc...) asparagine glycosylation is present at Asn-3. Residues 26-46 (SLGFIIGVSVVGNLLISILLV) form a helical membrane-spanning segment. Residues 47 to 57 (KDKTLHRAPYY) are Cytoplasmic-facing. A helical transmembrane segment spans residues 58–78 (FLLDLCCSDILRSAICFPFVF). Residues 79 to 96 (NSVKNGSTWTYGTLTCKV) lie on the Extracellular side of the membrane. Residue Asn-83 is glycosylated (N-linked (GlcNAc...) asparagine). Cysteines 94 and 172 form a disulfide. A helical transmembrane segment spans residues 97 to 117 (IAFLGVLSCFHTAFMLFCISV). Over 118-137 (TRYLAIAHHRFYTKRLTFWT) the chain is Cytoplasmic. A helical membrane pass occupies residues 138 to 158 (CLAVICMVWTLSVAMAFPPVL). At 159–188 (DVGTYSFIREEDQCTFQHRSFRANDSLGFM) the chain is on the extracellular side. A glycan (N-linked (GlcNAc...) asparagine) is linked at Asn-182. A helical membrane pass occupies residues 189-209 (LLLALILLATQLVYLKLIFFV). The Cytoplasmic segment spans residues 210-286 (HDRRKMKPVQ…FKMEKRISRM (77 aa)). The chain crosses the membrane as a helical span at residues 287–307 (FYIMTFLFLTLWGPYLVACYW). At 308-313 (RVFARG) the chain is on the extracellular side. Residues 314–334 (PVVPGGFLTAAVWMSFAQAGI) traverse the membrane as a helical segment. Over 335-370 (NPFVCIFSNRELRRCFSTTLLYCRKSRLPREPYCVI) the chain is Cytoplasmic.

Belongs to the G-protein coupled receptor 1 family. Interacts with DLG4 and DLG3. Highly expressed in brain and testis. Lower levels in small intestine, placenta and spleen. In brain regions, detected in all regions tested, but somewhat lower levels in the corpus callosum, medulla and spinal cord.

It localises to the cell membrane. Its subcellular location is the endoplasmic reticulum. In terms of biological role, orphan receptor. The protein is Probable G-protein coupled receptor 85 (GPR85) of Homo sapiens (Human).